The primary structure comprises 90 residues: DNA-directed RNA polymerase subunit omega (90 aa).

Belongs to the RNA polymerase subunit omega family. As to quaternary structure, the RNAP catalytic core consists of 2 alpha, 1 beta, 1 beta' and 1 omega subunit. When a sigma factor is associated with the core the holoenzyme is formed, which can initiate transcription.

It carries out the reaction RNA(n) + a ribonucleoside 5'-triphosphate = RNA(n+1) + diphosphate. Its function is as follows. Promotes RNA polymerase assembly. Latches the N- and C-terminal regions of the beta' subunit thereby facilitating its interaction with the beta and alpha subunits. The sequence is that of DNA-directed RNA polymerase subunit omega from Histophilus somni (strain 129Pt) (Haemophilus somnus).